The primary structure comprises 207 residues: HTH-type transcriptional regulator AqdR (207 aa).

The HTH tetR-type domain occupies 16 to 76; the sequence is ARFRERVLDA…DALLTRTQAE (61 aa). Residues 39–58 constitute a DNA-binding region (H-T-H motif); it reads GFADVARKAGVNGVSLYRRW.

In terms of biological role, may regulate the expression of genes involved in the degradation of the Pseudomonas aeruginosa quorum sensing signal molecules HHQ (2-heptyl-4-quinolone) and PQS (2-heptyl-3-hydroxy-4-quinolone). The protein is HTH-type transcriptional regulator AqdR of Rhodococcus erythropolis (Arthrobacter picolinophilus).